The following is a 495-amino-acid chain: Ectonucleoside triphosphate diphosphohydrolase 2 (495 aa).

At 2–4 (ARR) the chain is on the cytoplasmic side. Residues 5-25 (AAAVLLLLALGCLLGILLLCL) traverse the membrane as a helical segment. The Extracellular segment spans residues 26-465 (GSGDARGPPS…SHRSMLYNYW (440 aa)). Residue Asn-62 is glycosylated (N-linked (GlcNAc...) asparagine). An intrachain disulfide couples Cys-73 to Cys-97. Glu-162 (proton acceptor) is an active-site residue. 201–205 (GASTQ) lines the ATP pocket. Disulfide bonds link Cys-239–Cys-286, Cys-267–Cys-311, Cys-324–Cys-329, and Cys-378–Cys-400. Asn-297 carries an N-linked (GlcNAc...) asparagine glycan. N-linked (GlcNAc...) asparagine glycans are attached at residues Asn-418 and Asn-444. The helical transmembrane segment at 466–486 (VILILLFVITTLTALLTAVYL) threads the bilayer. Over 487–495 (LRRSKSSTI) the chain is Cytoplasmic.

The protein belongs to the GDA1/CD39 NTPase family. Ca(2+) serves as cofactor. Requires Mg(2+) as cofactor.

The protein resides in the membrane. Functionally, in the nervous system, could hydrolyze ATP and other nucleotides to regulate purinergic neurotransmission. Hydrolyzes ADP only to a marginal extent. The protein is Ectonucleoside triphosphate diphosphohydrolase 2 (ENTPD2) of Gallus gallus (Chicken).